Consider the following 119-residue polypeptide: Large ribosomal subunit protein bL20 (119 aa).

The protein belongs to the bacterial ribosomal protein bL20 family.

Functionally, binds directly to 23S ribosomal RNA and is necessary for the in vitro assembly process of the 50S ribosomal subunit. It is not involved in the protein synthesizing functions of that subunit. In Gluconacetobacter diazotrophicus (strain ATCC 49037 / DSM 5601 / CCUG 37298 / CIP 103539 / LMG 7603 / PAl5), this protein is Large ribosomal subunit protein bL20.